The primary structure comprises 466 residues: Glutamate--tRNA ligase (466 aa).

The 'HIGH' region motif lies at 11-21; that stretch reads PSPTGFIHLGN. The 'KMSKS' region signature appears at 243 to 247; the sequence is KMSKR. Lys-246 contributes to the ATP binding site.

It belongs to the class-I aminoacyl-tRNA synthetase family. Glutamate--tRNA ligase type 1 subfamily. As to quaternary structure, monomer.

The protein localises to the cytoplasm. It catalyses the reaction tRNA(Glu) + L-glutamate + ATP = L-glutamyl-tRNA(Glu) + AMP + diphosphate. In terms of biological role, catalyzes the attachment of glutamate to tRNA(Glu) in a two-step reaction: glutamate is first activated by ATP to form Glu-AMP and then transferred to the acceptor end of tRNA(Glu). This is Glutamate--tRNA ligase from Cupriavidus taiwanensis (strain DSM 17343 / BCRC 17206 / CCUG 44338 / CIP 107171 / LMG 19424 / R1) (Ralstonia taiwanensis (strain LMG 19424)).